Reading from the N-terminus, the 187-residue chain is Probable cobalt-precorrin-6B C(15)-methyltransferase (decarboxylating) (187 aa).

S-adenosyl-L-methionine-binding positions include Thr15, 39-43, Glu60, and Ala89; that span reads GSCTG.

The protein belongs to the methyltransferase superfamily. Archaeal-type CbiT family.

It carries out the reaction Co-precorrin-6B + S-adenosyl-L-methionine = Co-precorrin-7 + S-adenosyl-L-homocysteine + CO2. The protein operates within cofactor biosynthesis; adenosylcobalamin biosynthesis; cob(II)yrinate a,c-diamide from sirohydrochlorin (anaerobic route): step 8/10. Catalyzes the methylation of C-15 in cobalt-precorrin-6B followed by the decarboxylation of C-12 to form cobalt-precorrin-7. This Halobacterium salinarum (strain ATCC 700922 / JCM 11081 / NRC-1) (Halobacterium halobium) protein is Probable cobalt-precorrin-6B C(15)-methyltransferase (decarboxylating).